We begin with the raw amino-acid sequence, 148 residues long: Secretory phospholipase A2 (148 aa).

Residues 1–23 (MKLSVLLALGASSLAAAAPAATA) form the signal peptide. The N-linked (GlcNAc...) asparagine glycan is linked to Asn61. Cys62 and Cys78 form a disulfide bridge. His81 is a catalytic residue. Asp82 lines the Ca(2+) pocket.

The protein belongs to the phospholipase A2 family. Ca(2+) is required as a cofactor.

The protein resides in the secreted. It carries out the reaction a 1,2-diacyl-sn-glycero-3-phosphocholine + H2O = a 1-acyl-sn-glycero-3-phosphocholine + a fatty acid + H(+). Its function is as follows. Secretory phospholipase that catalyzes the calcium-dependent hydrolysis of the 2-acyl groups in 3-sn-phosphoglycerides. Increases the ability to utilize host-derived nutrients and lipids, and promotes lipid dropplets accumulation. Plays a role in virulence. The protein is Secretory phospholipase A2 of Arthroderma benhamiae (strain ATCC MYA-4681 / CBS 112371) (Trichophyton mentagrophytes).